Consider the following 140-residue polypeptide: Large ribosomal subunit protein uL16 (140 aa).

The tract at residues 1–24 (MALAPARTKYRKSQKGSRAGNAKR) is disordered.

The protein belongs to the universal ribosomal protein uL16 family. Part of the 50S ribosomal subunit.

Its function is as follows. Binds 23S rRNA and is also seen to make contacts with the A and possibly P site tRNAs. This Opitutus terrae (strain DSM 11246 / JCM 15787 / PB90-1) protein is Large ribosomal subunit protein uL16.